The following is a 102-amino-acid chain: Small ribosomal subunit protein uS10 (102 aa).

It belongs to the universal ribosomal protein uS10 family. Part of the 30S ribosomal subunit.

Its function is as follows. Involved in the binding of tRNA to the ribosomes. The polypeptide is Small ribosomal subunit protein uS10 (Micrococcus luteus (strain ATCC 4698 / DSM 20030 / JCM 1464 / CCM 169 / CCUG 5858 / IAM 1056 / NBRC 3333 / NCIMB 9278 / NCTC 2665 / VKM Ac-2230) (Micrococcus lysodeikticus)).